A 73-amino-acid chain; its full sequence is Large ribosomal subunit protein bL31 (73 aa).

The protein belongs to the bacterial ribosomal protein bL31 family. Type A subfamily. As to quaternary structure, part of the 50S ribosomal subunit.

Its function is as follows. Binds the 23S rRNA. In Roseobacter denitrificans (strain ATCC 33942 / OCh 114) (Erythrobacter sp. (strain OCh 114)), this protein is Large ribosomal subunit protein bL31 (rpmE).